A 352-amino-acid chain; its full sequence is Farnesyl pyrophosphate synthase (352 aa).

3 residues coordinate isopentenyl diphosphate: Lys52, Arg55, and Gln93. Positions 100 and 104 each coordinate Mg(2+). Arg109 contacts dimethylallyl diphosphate. Isopentenyl diphosphate is bound at residue Arg110. Lys197, Thr198, Gln237, Lys254, and Lys263 together coordinate dimethylallyl diphosphate.

The protein belongs to the FPP/GGPP synthase family. Requires Mg(2+) as cofactor.

The enzyme catalyses isopentenyl diphosphate + dimethylallyl diphosphate = (2E)-geranyl diphosphate + diphosphate. The catalysed reaction is isopentenyl diphosphate + (2E)-geranyl diphosphate = (2E,6E)-farnesyl diphosphate + diphosphate. It functions in the pathway isoprenoid biosynthesis; farnesyl diphosphate biosynthesis; farnesyl diphosphate from geranyl diphosphate and isopentenyl diphosphate: step 1/1. It participates in isoprenoid biosynthesis; geranyl diphosphate biosynthesis; geranyl diphosphate from dimethylallyl diphosphate and isopentenyl diphosphate: step 1/1. Farnesyl pyrophosphate synthase; part of the second module of ergosterol biosynthesis pathway that includes the middle steps of the pathway. ERG20 catalyzes the sequential condensation of isopentenyl pyrophosphate with dimethylallyl pyrophosphate, and then with the resultant geranylpyrophosphate to the ultimate product farnesyl pyrophosphate. The second module is carried out in the vacuole and involves the formation of farnesyl diphosphate, which is also an important intermediate in the biosynthesis of ubiquinone, dolichol, heme and prenylated proteins. Activity by the mevalonate kinase ERG12 first converts mevalonate into 5-phosphomevalonate. 5-phosphomevalonate is then further converted to 5-diphosphomevalonate by the phosphomevalonate kinase ERG8. The diphosphomevalonate decarboxylase MVD1/ERG19 then produces isopentenyl diphosphate. The isopentenyl-diphosphate delta-isomerase IDI1 then catalyzes the 1,3-allylic rearrangement of the homoallylic substrate isopentenyl (IPP) to its highly electrophilic allylic isomer, dimethylallyl diphosphate (DMAPP). Finally the farnesyl diphosphate synthase ERG20 catalyzes the sequential condensation of isopentenyl pyrophosphate with dimethylallyl pyrophosphate, and then with the resultant geranylpyrophosphate to the ultimate product farnesyl pyrophosphate. This Saccharomyces cerevisiae (strain ATCC 204508 / S288c) (Baker's yeast) protein is Farnesyl pyrophosphate synthase (ERG20).